A 460-amino-acid polypeptide reads, in one-letter code: Armadillo repeat-containing protein LFR (460 aa).

Residues 1-30 (MQKRELGKSGGNSGGSSGPPAKRGRPFGST) form a disordered region. The segment covering 8–17 (KSGGNSGGSS) has biased composition (gly residues). 3 ARM repeats span residues 227–269 (DNEV…NLAH), 323–362 (NEPF…NLVE), and 366–407 (DCRL…NLVS).

As to quaternary structure, interacts with AS2. As to expression, expressed in roots, leaves, stems and flowers.

It is found in the nucleus. Its function is as follows. Involved in leaf and flower development. Plays roles in leaf development partly by associating with AS2 and repressing KNAT1/BP transcription. Required for the formation of anther cell layers and normal expression of genes that regulates anther development. The protein is Armadillo repeat-containing protein LFR of Arabidopsis thaliana (Mouse-ear cress).